Consider the following 134-residue polypeptide: Small ribosomal subunit protein uS12 (134 aa).

The segment at 1–26 is disordered; it reads MPTIQQLVRKGRESFADKSKSPALNS. Over residues 10-20 the composition is skewed to basic and acidic residues; it reads KGRESFADKSK. At Asp-89 the chain carries 3-methylthioaspartic acid. The segment at 103 to 134 is disordered; the sequence is DTAGVNGRTQRRSKYGAKRPKPGQAPAAKGKK. Over residues 111-123 the composition is skewed to basic residues; that stretch reads TQRRSKYGAKRPK. A compositionally biased stretch (low complexity) spans 124–134; the sequence is PGQAPAAKGKK.

This sequence belongs to the universal ribosomal protein uS12 family. Part of the 30S ribosomal subunit. Contacts proteins S8 and S17. May interact with IF1 in the 30S initiation complex.

In terms of biological role, with S4 and S5 plays an important role in translational accuracy. Functionally, interacts with and stabilizes bases of the 16S rRNA that are involved in tRNA selection in the A site and with the mRNA backbone. Located at the interface of the 30S and 50S subunits, it traverses the body of the 30S subunit contacting proteins on the other side and probably holding the rRNA structure together. The combined cluster of proteins S8, S12 and S17 appears to hold together the shoulder and platform of the 30S subunit. The protein is Small ribosomal subunit protein uS12 of Porphyromonas gingivalis (strain ATCC BAA-308 / W83).